Consider the following 444-residue polypeptide: Tubulin beta-8 chain (444 aa).

The MREI motif motif lies at Met-1–Ile-4. GTP contacts are provided by Gln-11, Glu-69, Ser-138, Gly-142, Thr-143, and Gly-144. Glu-69 contributes to the Mg(2+) binding site. At Ser-172 the chain carries Phosphoserine; by CDK1. Asn-204 and Asn-226 together coordinate GTP. Positions Gln-423 to Ala-444 are disordered. Over residues Thr-429 to Ala-444 the composition is skewed to acidic residues. Glu-436 bears the 5-glutamyl polyglutamate mark.

It belongs to the tubulin family. Dimer of alpha and beta chains. A typical microtubule is a hollow water-filled tube with an outer diameter of 25 nm and an inner diameter of 15 nM. Alpha-beta heterodimers associate head-to-tail to form protofilaments running lengthwise along the microtubule wall with the beta-tubulin subunit facing the microtubule plus end conferring a structural polarity. Microtubules usually have 13 protofilaments but different protofilament numbers can be found in some organisms and specialized cells. Mg(2+) is required as a cofactor. In terms of processing, some glutamate residues at the C-terminus are polyglycylated, resulting in polyglycine chains on the gamma-carboxyl group. Glycylation is mainly limited to tubulin incorporated into axonemes (cilia and flagella) whereas glutamylation is prevalent in neuronal cells, centrioles, axonemes, and the mitotic spindle. Both modifications can coexist on the same protein on adjacent residues, and lowering polyglycylation levels increases polyglutamylation, and reciprocally. Cilia and flagella glycylation is required for their stability and maintenance. Flagella glycylation controls sperm motility. Some glutamate residues at the C-terminus are polyglutamylated, resulting in polyglutamate chains on the gamma-carboxyl group. Polyglutamylation plays a key role in microtubule severing by spastin (SPAST). SPAST preferentially recognizes and acts on microtubules decorated with short polyglutamate tails: severing activity by SPAST increases as the number of glutamates per tubulin rises from one to eight, but decreases beyond this glutamylation threshold. Glutamylation is also involved in cilia motility. Post-translationally, phosphorylated on Ser-172 by CDK1 during the cell cycle, from metaphase to telophase, but not in interphase. This phosphorylation inhibits tubulin incorporation into microtubules.

The protein resides in the cytoplasm. It localises to the cytoskeleton. It is found in the spindle. In terms of biological role, tubulin is the major constituent of microtubules, a cylinder consisting of laterally associated linear protofilaments composed of alpha- and beta-tubulin heterodimers. Microtubules grow by the addition of GTP-tubulin dimers to the microtubule end, where a stabilizing cap forms. Below the cap, tubulin dimers are in GDP-bound state, owing to GTPase activity of alpha-tubulin. Has a key role in meiotic spindle assembly and oocyte maturation. This chain is Tubulin beta-8 chain (TUBB8), found in Pan troglodytes (Chimpanzee).